The following is a 170-amino-acid chain: MSGAGRPEYTVDAQGLTLGVVATRWNAEVVEPMLERALAAAEQCKVAETTVVRVAGAVEIPVVAQELARTHDAVVALGAVIRGDTPHFDYVCQSFTHGLTEVALRTEVPVGNGVLTCDTLEQARDRAGLPDSKEDKGWEAAVAALDTALVLRKLRDARGQRDGRPRPTTT.

5-amino-6-(D-ribitylamino)uracil-binding positions include Trp-25, 57–59 (AVE), and 79–81 (AVI). 84-85 (DT) lines the (2S)-2-hydroxy-3-oxobutyl phosphate pocket. His-87 serves as the catalytic Proton donor. Asn-112 contributes to the 5-amino-6-(D-ribitylamino)uracil binding site. Arg-126 serves as a coordination point for (2S)-2-hydroxy-3-oxobutyl phosphate.

Belongs to the DMRL synthase family.

The catalysed reaction is (2S)-2-hydroxy-3-oxobutyl phosphate + 5-amino-6-(D-ribitylamino)uracil = 6,7-dimethyl-8-(1-D-ribityl)lumazine + phosphate + 2 H2O + H(+). Its pathway is cofactor biosynthesis; riboflavin biosynthesis; riboflavin from 2-hydroxy-3-oxobutyl phosphate and 5-amino-6-(D-ribitylamino)uracil: step 1/2. Its function is as follows. Catalyzes the formation of 6,7-dimethyl-8-ribityllumazine by condensation of 5-amino-6-(D-ribitylamino)uracil with 3,4-dihydroxy-2-butanone 4-phosphate. This is the penultimate step in the biosynthesis of riboflavin. This Thermobifida fusca (strain YX) protein is 6,7-dimethyl-8-ribityllumazine synthase.